A 205-amino-acid chain; its full sequence is MEGLSDVASFATKLKNTLIQYHSIEEDKWRVAKKTKDVTVWRKPSEEFNGYLYKAQGVIDDLVYSIIDHIRPGPCRLDWDSLMTSLDILENFEENCCVMRYTTAGQLWNIISPREFVDFSYTVGYKEGLLSCGISLDWDEKRPEFVRGYNHPCGWFCVPLKDNPNQSLLTGYIQTDLRGMIPQSAVDTAMASTLTNFYGDLRKAL.

Residues 1–205 (MEGLSDVASF…NFYGDLRKAL (205 aa)) enclose the START domain.

It carries out the reaction cholesterol(in) = cholesterol(out). Involved in the intracellular transport of cholesterol. Binds cholesterol or other sterols. The protein is StAR-related lipid transfer protein 4 (STARD4) of Homo sapiens (Human).